The primary structure comprises 74 residues: EMBRYO SURROUNDING FACTOR 1-like protein 4 (74 aa).

The N-terminal stretch at 1 to 22 (MKSSHAYLVCILLLSLFSLHQC) is a signal peptide. Cystine bridges form between cysteine 36/cysteine 51, cysteine 41/cysteine 70, cysteine 49/cysteine 66, and cysteine 52/cysteine 59.

This sequence belongs to the MEG family. In terms of tissue distribution, expressed in flowers.

This is EMBRYO SURROUNDING FACTOR 1-like protein 4 (ESFL4) from Arabidopsis thaliana (Mouse-ear cress).